A 313-amino-acid chain; its full sequence is Ribosomal RNA small subunit methyltransferase H (313 aa).

S-adenosyl-L-methionine contacts are provided by residues 35 to 37 (GGH), aspartate 55, phenylalanine 79, aspartate 101, and glutamine 108.

It belongs to the methyltransferase superfamily. RsmH family.

It is found in the cytoplasm. It catalyses the reaction cytidine(1402) in 16S rRNA + S-adenosyl-L-methionine = N(4)-methylcytidine(1402) in 16S rRNA + S-adenosyl-L-homocysteine + H(+). Its function is as follows. Specifically methylates the N4 position of cytidine in position 1402 (C1402) of 16S rRNA. The chain is Ribosomal RNA small subunit methyltransferase H from Shigella sonnei (strain Ss046).